Here is a 789-residue protein sequence, read N- to C-terminus: MFNLIRKSTEWGGKTLVLESGKIARQANGAVVVTYGGTTVLSTVVAGKAKEPVDFLPLTVQFVAKSYAVGKIPGGFLKREGKPSDRETLISRLIDRSIRPLFPSGFYDEVSIVCNLLSYDTVTPPEVTALIGATAALAISGVPFNGMVVGARVGYLLSEDKYLLNASADEMLSSSLDLFLSGNKDSVLMVESEASELSESQMLAAISFGHQNCQEVIKLIEEFREESGILPFGFIPHDITSLVDDIASSYTESFSIAYSNIVKKERVLELEKLRDQVLSDMLAKYEQPNGNLQCQYSSQDIISALKSFERSLVRSKIIETSSRIDGRAFNGIRDIEIEIDVLPKTHGSALFTRGNTQALVVTALGTPQDEQIVDDLDGDRRENFLLHYNFPPYAVGESAALRAPGRREIGHGKLAWKAIRYVLPEKSDFPYTIRVVSEITESDGSSSMATVCGASLALMDTGVPIKAPVAGIAMGLIKEGEKFIILSDILGDEDHLGDMDFKVAGTSSGITALQMDMKISGISIEVIEKSLLQAKDGRMHILDKMNLVIQESRECIKNHAPRIESIFINKDKIRNVIGSGGKNIREICEKTGARVEIMQDGTVMIYAINNDAVEYAKNMIMDIVSEPEIGKVFDGTVIEIVKFGAFVSFLGGKRGLIHISEIKNEHINAVGSVISVNDKVKVLVIGIDREYVQLSMRRVDQETGEPIDGELYNIRKTNSDSDDSFLSSGSVNNRHGSEKKRRGSGRSRRSSGGSSYHRDDLHNNGFGNGNRSFNDNRNGNEVPRKPRFF.

Mg(2+) contacts are provided by Asp494 and Asp500. Residues 561-620 (PRIESIFINKDKIRNVIGSGGKNIREICEKTGARVEIMQDGTVMIYAINNDAVEYAKNMI) form the KH domain. An S1 motif domain is found at 630–697 (GKVFDGTVIE…DREYVQLSMR (68 aa)). The tract at residues 709-789 (GELYNIRKTN…NEVPRKPRFF (81 aa)) is disordered. Over residues 737-749 (SEKKRRGSGRSRR) the composition is skewed to basic residues. A compositionally biased stretch (low complexity) spans 763–780 (NNGFGNGNRSFNDNRNGN).

This sequence belongs to the polyribonucleotide nucleotidyltransferase family. Mg(2+) serves as cofactor.

The protein localises to the cytoplasm. The catalysed reaction is RNA(n+1) + phosphate = RNA(n) + a ribonucleoside 5'-diphosphate. Functionally, involved in mRNA degradation. Catalyzes the phosphorolysis of single-stranded polyribonucleotides processively in the 3'- to 5'-direction. The chain is Polyribonucleotide nucleotidyltransferase from Ehrlichia ruminantium (strain Gardel).